The primary structure comprises 97 residues: Large ribosomal subunit protein bL28 (97 aa).

Belongs to the bacterial ribosomal protein bL28 family.

The chain is Large ribosomal subunit protein bL28 from Rickettsia akari (strain Hartford).